Consider the following 372-residue polypeptide: uncharacterized protein (372 aa).

The signal sequence occupies residues 1 to 33; it reads MVRRALRLAAGTASLAAGTWLLRALHGTPAALG.

The protein to K.pneumoniae RomA.

This is an uncharacterized protein from Mycobacterium bovis (strain ATCC BAA-935 / AF2122/97).